The sequence spans 85 residues: Large ribosomal subunit protein bL27 (85 aa).

It belongs to the bacterial ribosomal protein bL27 family.

The protein is Large ribosomal subunit protein bL27 of Campylobacter concisus (strain 13826).